A 312-amino-acid polypeptide reads, in one-letter code: Malate dehydrogenase (312 aa).

NAD(+) contacts are provided by residues 7–13 (GASGGIG) and aspartate 34. Substrate is bound by residues arginine 81 and arginine 87. NAD(+) is bound by residues asparagine 94 and 117–119 (ITN). Residues asparagine 119 and arginine 153 each coordinate substrate. Histidine 177 serves as the catalytic Proton acceptor. Methionine 227 lines the NAD(+) pocket.

The protein belongs to the LDH/MDH superfamily. MDH type 1 family. Homodimer.

It catalyses the reaction (S)-malate + NAD(+) = oxaloacetate + NADH + H(+). Functionally, catalyzes the reversible oxidation of malate to oxaloacetate. This chain is Malate dehydrogenase, found in Actinobacillus succinogenes (strain ATCC 55618 / DSM 22257 / CCUG 43843 / 130Z).